We begin with the raw amino-acid sequence, 197 residues long: Holliday junction branch migration complex subunit RuvA (197 aa).

Residues M1–L64 are domain I. Positions T65 to G143 are domain II. Residues K144 to L152 form a flexible linker region. Residues L152–I197 form a domain III region.

Belongs to the RuvA family. Homotetramer. Forms an RuvA(8)-RuvB(12)-Holliday junction (HJ) complex. HJ DNA is sandwiched between 2 RuvA tetramers; dsDNA enters through RuvA and exits via RuvB. An RuvB hexamer assembles on each DNA strand where it exits the tetramer. Each RuvB hexamer is contacted by two RuvA subunits (via domain III) on 2 adjacent RuvB subunits; this complex drives branch migration. In the full resolvosome a probable DNA-RuvA(4)-RuvB(12)-RuvC(2) complex forms which resolves the HJ.

It localises to the cytoplasm. The RuvA-RuvB-RuvC complex processes Holliday junction (HJ) DNA during genetic recombination and DNA repair, while the RuvA-RuvB complex plays an important role in the rescue of blocked DNA replication forks via replication fork reversal (RFR). RuvA specifically binds to HJ cruciform DNA, conferring on it an open structure. The RuvB hexamer acts as an ATP-dependent pump, pulling dsDNA into and through the RuvAB complex. HJ branch migration allows RuvC to scan DNA until it finds its consensus sequence, where it cleaves and resolves the cruciform DNA. The chain is Holliday junction branch migration complex subunit RuvA from Caldicellulosiruptor bescii (strain ATCC BAA-1888 / DSM 6725 / KCTC 15123 / Z-1320) (Anaerocellum thermophilum).